Reading from the N-terminus, the 142-residue chain is MALERTFSIIKPNAVANNNIGAIYARFESAGFKIIAAKMLHLTKEQAEGFYAEHKGRPFFDGLVEFMTSGPIIVQVLEGENAVQRHRDIMGATNPDNALAGTLRADFADSFTANAVHGSDAVESAQREIAYFFAADEIFPRS.

The ATP site is built by lysine 11, phenylalanine 59, arginine 87, threonine 93, arginine 104, and asparagine 114. Histidine 117 acts as the Pros-phosphohistidine intermediate in catalysis.

This sequence belongs to the NDK family. As to quaternary structure, homotetramer. The cofactor is Mg(2+).

The protein resides in the cytoplasm. It catalyses the reaction a 2'-deoxyribonucleoside 5'-diphosphate + ATP = a 2'-deoxyribonucleoside 5'-triphosphate + ADP. The catalysed reaction is a ribonucleoside 5'-diphosphate + ATP = a ribonucleoside 5'-triphosphate + ADP. In terms of biological role, major role in the synthesis of nucleoside triphosphates other than ATP. The ATP gamma phosphate is transferred to the NDP beta phosphate via a ping-pong mechanism, using a phosphorylated active-site intermediate. The chain is Nucleoside diphosphate kinase from Yersinia pseudotuberculosis serotype I (strain IP32953).